Consider the following 189-residue polypeptide: MGKAKKTRKFGLVKRTLNTKKDQRLKKNQENIKTKEDPELTRNIPQVSSALFFQYNQAIKPPYQVLIDTNFINFSIQKKVDIVRGMMDCLLAKCNPLITDCVMAELEKLGPKYRIALKLARDPRIKRLSCSHKGTYADDCLVHRVLQHKCYIVATNDAGLKQRIRKIPGIPLMSVGGHAYVIEKLPDVF.

The 100-residue stretch at 63–162 (YQVLIDTNFI…VATNDAGLKQ (100 aa)) folds into the PINc domain.

It belongs to the UTP23/FCF1 family. FCF1 subfamily. As to quaternary structure, interacts with FAF1.

The protein resides in the nucleus. It is found in the nucleolus. In terms of biological role, essential protein involved in pre-rRNA processing and 40S ribosomal subunit assembly. Required for the early cleavage steps of 35S rRNA at the A(0), A(1), and A(2) sites. This is rRNA-processing protein FCF1 (FCF1) from Saccharomyces cerevisiae (strain ATCC 204508 / S288c) (Baker's yeast).